The sequence spans 328 residues: Tyrosine recombinase XerC (328 aa).

The Core-binding (CB) domain maps to 13–100 (QAPHPQIAAY…AWRGWFKWMA (88 aa)). The 198-residue stretch at 122-319 (RLPKALSVEQ…DFQHLAKIYD (198 aa)) folds into the Tyr recombinase domain. Residues Arg-162, Lys-197, His-271, Arg-274, and His-297 contribute to the active site. The active-site O-(3'-phospho-DNA)-tyrosine intermediate is the Tyr-306.

This sequence belongs to the 'phage' integrase family. XerC subfamily. In terms of assembly, forms a cyclic heterotetrameric complex composed of two molecules of XerC and two molecules of XerD.

It is found in the cytoplasm. Site-specific tyrosine recombinase, which acts by catalyzing the cutting and rejoining of the recombining DNA molecules. The XerC-XerD complex is essential to convert dimers of the bacterial chromosome into monomers to permit their segregation at cell division. It also contributes to the segregational stability of plasmids. In Ralstonia pickettii (strain 12J), this protein is Tyrosine recombinase XerC.